A 511-amino-acid polypeptide reads, in one-letter code: MRWISRPGWPGHLLALAAGALTPLALAPFDYWPLAILSIALLYLGLRGLPGKSALWRGWWYGFGAFGAGTSWIYVSIHDYGAASVPLASLLMLGFTAGVAFFFALPAWLWARCLRRDNAPLGDALAFAALWLALELFRSWFLTGFPWLYAGYSQLQGPLAGLVPVGGVWLSSFVIALSAALLVNLPRLFPHGASLLLGLVLLLGPWAAGLYLKGHAWTHSAGEPLRVVAIQGNIAQELKWDPNQVRAQLDLYRDLSLPQQDVDLIVWPETAVPILQDMASGYLGAMGQVADEKNAALITGVPVRERLTDGKSRYFNGITVVGEGAGTYLKQKLVPFGEYVPLQDLLRGLIAFFDLPMSDFARGPADQPLLKAKGYEIAPYICYEVVYPEFAAALAAQSQVLLTVSNDTWFGTSIGPLQHLQMAQMRALESGRWMIRATNNGVTGLIDPYGRIVRQIPQFQQGILRGEVIPMQGLTPYLQYRVWPLAGLAGVLLLWALLGRQLRPQERRLFG.

The next 6 helical transmembrane spans lie at 7-29 (PGWP…LAPF), 58-78 (GWWY…VSIH), 90-110 (LLML…AWLW), 125-145 (LAFA…LTGF), 163-183 (VPVG…ALLV), and 192-212 (GASL…GLYL). The CN hydrolase domain occupies 230–470 (IQGNIAQELK…QGILRGEVIP (241 aa)). The active-site Proton acceptor is the E269. K330 is a catalytic residue. The active-site Nucleophile is C382. A helical membrane pass occupies residues 482–502 (VWPLAGLAGVLLLWALLGRQL).

The protein belongs to the CN hydrolase family. Apolipoprotein N-acyltransferase subfamily.

Its subcellular location is the cell inner membrane. The enzyme catalyses N-terminal S-1,2-diacyl-sn-glyceryl-L-cysteinyl-[lipoprotein] + a glycerophospholipid = N-acyl-S-1,2-diacyl-sn-glyceryl-L-cysteinyl-[lipoprotein] + a 2-acyl-sn-glycero-3-phospholipid + H(+). The protein operates within protein modification; lipoprotein biosynthesis (N-acyl transfer). In terms of biological role, catalyzes the phospholipid dependent N-acylation of the N-terminal cysteine of apolipoprotein, the last step in lipoprotein maturation. The protein is Apolipoprotein N-acyltransferase of Pseudomonas aeruginosa (strain LESB58).